Consider the following 637-residue polypeptide: Poly(U)-binding-splicing factor hfp (637 aa).

2 stretches are compositionally biased toward basic and acidic residues: residues 1–20 and 28–37; these read MGSN…REIS and TRSDSGKSTD. The tract at residues 1-41 is disordered; sequence MGSNDRASRSPRSDDQREISDMPATKRTRSDSGKSTDSKIP. Phosphoserine is present on residues S13 and S30. RRM domains lie at 130–208 and 227–305; these read CRVY…RPSN and NRIY…RSIT. One can recognise an RRM 3; atypical domain in the interval 537–627; that stretch reads RVIILRNMVG…RRVVAELYDQ (91 aa).

Belongs to the RRM half pint family. Interacts with enc. However, given the cytoplasmic localization of enc, the relevance of such interaction is unclear. Expressed in all germline cells and within the follicle cell.

It localises to the nucleus. Splicing factor that regulates oogenesis and controls both mitosis and mRNA localization in the germline by regulating mRNA splicing of a subset of genes within the ovary. Probably acts by regulating the alternative splice site selection of the otu transcript. Also regulates the alternative splicing of eIF4E1 and grk, while it is not involved in the splicing of par-1, sqd or psq. Involved in the alternative splicing of the bicistronic pre-mRNA encoding Kdm3 and CG8176; required for the efficient production of mRNA encoding Kdm3 and Kdm3-mediated regulation of rhino-dependent piRNA production. This is Poly(U)-binding-splicing factor hfp from Drosophila melanogaster (Fruit fly).